Consider the following 116-residue polypeptide: Dynein light chain Tctex-type 3 (116 aa).

Residue Y4 is modified to 3'-nitrotyrosine.

Belongs to the dynein light chain Tctex-type family. As to quaternary structure, homodimer. The cytoplasmic dynein 1 complex consists of two catalytic heavy chains (HCs) and a number of non-catalytic subunits presented by intermediate chains (ICs), light intermediate chains (LICs) and light chains (LCs); the composition seems to vary in respect to the IC, LIC and LC composition. The heavy chain homodimer serves as a scaffold for the probable homodimeric assembly of the respective non-catalytic subunits. The ICs and LICs bind directly to the HC dimer and the LCs assemble on the IC dimer. DYNLT1 and DYNLT3 compete for association with dynein IC (DYNC1I1 or DYNC1I2). Self-associates. Interacts with DYNC1I1 and DYNC1I2. Interacts with BUB3. Interacts with SATB1 in nucleus to form complex with matrix attachment regions (MARs) of DNA.

It localises to the nucleus. It is found in the cytoplasm. Its subcellular location is the cytoskeleton. The protein localises to the chromosome. The protein resides in the centromere. It localises to the kinetochore. Acts as one of several non-catalytic accessory components of the cytoplasmic dynein 1 complex that are thought to be involved in linking dynein to cargos and to adapter proteins that regulate dynein function. Cytoplasmic dynein 1 acts as a motor for the intracellular retrograde motility of vesicles and organelles along microtubules. Probably binds BUB3 as part of transport cargo. Required for the efficient progression through mitosis. The chain is Dynein light chain Tctex-type 3 (DYNLT3) from Ovis aries (Sheep).